The chain runs to 360 residues: UDP-D-xylose:L-fucose alpha-1,3-D-xylosyltransferase MGP4 (360 aa).

The segment at 1 to 25 (MAQQKFLHQRPIQNPFTNPFSSSPL) is disordered. At 1–41 (MAQQKFLHQRPIQNPFTNPFSSSPLSTSSISNRPISLLSRN) the chain is on the cytoplasmic side. The segment covering 14 to 25 (NPFTNPFSSSPL) has biased composition (low complexity). A helical; Signal-anchor for type II membrane protein membrane pass occupies residues 42–62 (GLLLLLALLVILGVFLPWAGS). Residues 63–360 (PLFPSPNKLS…ASESPLGKLE (298 aa)) lie on the Lumenal side of the membrane. N93 and N168 each carry an N-linked (GlcNAc...) asparagine glycan. The DXD motif motif lies at 191–193 (DVD). Residues N285 and N310 are each glycosylated (N-linked (GlcNAc...) asparagine).

This sequence belongs to the glycosyltransferase 77 family. It depends on Mn(2+) as a cofactor. The cofactor is Mg(2+). As to expression, widely expressed.

It is found in the golgi apparatus membrane. Functionally, catalyzes the transfer of D-xylose from UDP-alpha-D-xylose onto L-fucose. Probably involved in the biosynthesis of rhamnogalacturonan II (RG-II) through xylosylation of the internal fucose moiety of the A-chain of RG-II, a structurally complex pectic polysaccharide of the primary cell wall. RG-II is essential for the cell wall integrity of rapidly growing tissues such as roots and pollen tube growth and elongation. This Arabidopsis thaliana (Mouse-ear cress) protein is UDP-D-xylose:L-fucose alpha-1,3-D-xylosyltransferase MGP4.